The following is a 626-amino-acid chain: Methanol dehydrogenase [cytochrome c] subunit 1 (626 aa).

The signal sequence occupies residues 1–27 (MSRFVTSVSALAMLALAPAALSSVAYA). The cysteines at positions 130 and 131 are disulfide-linked. Residues Glu204 and Asn288 each contribute to the Ca(2+) site. The Proton acceptor role is filled by Asp330. A disulfide bridge links Cys413 with Cys442.

The protein belongs to the bacterial PQQ dehydrogenase family. In terms of assembly, heterotetramer composed of 2 alpha and 2 beta subunits. Requires pyrroloquinoline quinone as cofactor. Ca(2+) is required as a cofactor.

Its subcellular location is the cell inner membrane. It catalyses the reaction 2 Fe(III)-[cytochrome cL] + a primary alcohol = 2 Fe(II)-[cytochrome cL] + an aldehyde + 2 H(+). Functionally, catalyzes the oxidation of primary alcohols including methanol. In Methylobacterium organophilum, this protein is Methanol dehydrogenase [cytochrome c] subunit 1 (moxF).